Reading from the N-terminus, the 181-residue chain is Transcriptional repressor NrdR (181 aa).

A zinc finger lies at 3-34; sequence CLFCQHTYTRVIDSRVSEDGATIRRRRECEAC. The ATP-cone domain maps to 49 to 139; that stretch reads PVIIKKDGGR…VYRSFQDVAD (91 aa).

It belongs to the NrdR family. Zn(2+) is required as a cofactor.

Its function is as follows. Negatively regulates transcription of bacterial ribonucleotide reductase nrd genes and operons by binding to NrdR-boxes. The sequence is that of Transcriptional repressor NrdR from Xylella fastidiosa (strain 9a5c).